The following is an 89-amino-acid chain: Small ribosomal subunit protein uS15 (89 aa).

It belongs to the universal ribosomal protein uS15 family. In terms of assembly, part of the 30S ribosomal subunit. Forms a bridge to the 50S subunit in the 70S ribosome, contacting the 23S rRNA.

Functionally, one of the primary rRNA binding proteins, it binds directly to 16S rRNA where it helps nucleate assembly of the platform of the 30S subunit by binding and bridging several RNA helices of the 16S rRNA. In terms of biological role, forms an intersubunit bridge (bridge B4) with the 23S rRNA of the 50S subunit in the ribosome. The sequence is that of Small ribosomal subunit protein uS15 from Anoxybacillus flavithermus (strain DSM 21510 / WK1).